The following is a 293-amino-acid chain: Elongation factor Ts (293 aa).

The interval 80–83 (TDFV) is involved in Mg(2+) ion dislocation from EF-Tu.

This sequence belongs to the EF-Ts family.

The protein resides in the cytoplasm. Its function is as follows. Associates with the EF-Tu.GDP complex and induces the exchange of GDP to GTP. It remains bound to the aminoacyl-tRNA.EF-Tu.GTP complex up to the GTP hydrolysis stage on the ribosome. This Staphylococcus aureus (strain USA300) protein is Elongation factor Ts.